The following is a 960-amino-acid chain: Chromo domain-containing protein 1 (960 aa).

In terms of domain architecture, Chromo spans 22–74 (YEVEDILADRVNKNGINEYYIKWAGYDWYDNTWEPEQNLFGAEKVLKKWKKRK).

Ago1, chp1 and tas3 interact to form the core of the RNA-induced transcriptional silencing (RITS) complex. The RITS complex interacts with the RDRC complex via interaction between ago1 and hrr1. Clr4 has a role in mediating this interaction. Interacts with dri1.

It localises to the nucleus. It is found in the cytoplasm. The protein resides in the cytoskeleton. The protein localises to the microtubule organizing center. Its subcellular location is the spindle pole body. Its function is as follows. Component of the kinetochore which plays a role in stabilizing microtubules and so allowing accurate chromosome segregation. Has a role in the RNA interference (RNAi) pathway which is important for heterochromatin formation and accurate chromosome segregation. A member of the RNA-induced transcriptional silencing (RITS) complex which is involved in the biosynthesis of dsRNA from primer siRNAs provided by the RNA-directed RNA polymerase (RDRC) complex. In Schizosaccharomyces pombe (strain 972 / ATCC 24843) (Fission yeast), this protein is Chromo domain-containing protein 1.